A 492-amino-acid polypeptide reads, in one-letter code: ATP synthase subunit beta, chloroplastic (492 aa).

Gly-170–Thr-177 is a binding site for ATP.

It belongs to the ATPase alpha/beta chains family. F-type ATPases have 2 components, CF(1) - the catalytic core - and CF(0) - the membrane proton channel. CF(1) has five subunits: alpha(3), beta(3), gamma(1), delta(1), epsilon(1). CF(0) has four main subunits: a(1), b(1), b'(1) and c(9-12).

The protein localises to the plastid. It localises to the chloroplast thylakoid membrane. The enzyme catalyses ATP + H2O + 4 H(+)(in) = ADP + phosphate + 5 H(+)(out). Its function is as follows. Produces ATP from ADP in the presence of a proton gradient across the membrane. The catalytic sites are hosted primarily by the beta subunits. This is ATP synthase subunit beta, chloroplastic from Angiopteris lygodiifolia (Turnip fern).